The chain runs to 470 residues: Dihydrolipoyl dehydrogenase (470 aa).

FAD is bound by residues 39–47 (EKATLGGVC), Lys56, and Ala119. Residues Cys47 and Cys52 are joined by a disulfide bond. NAD(+) is bound by residues 183 to 187 (GGGYI), Glu206, and 272 to 275 (TVGR). 2 residues coordinate FAD: Asp315 and Ala323. The Proton acceptor role is filled by His447.

The protein belongs to the class-I pyridine nucleotide-disulfide oxidoreductase family. As to quaternary structure, homodimer. Component of two multienzyme complexes: pyruvate dehydrogenase complex and oxoglutarate dehydrogenase complex. FAD is required as a cofactor.

Its subcellular location is the cytoplasm. It carries out the reaction N(6)-[(R)-dihydrolipoyl]-L-lysyl-[protein] + NAD(+) = N(6)-[(R)-lipoyl]-L-lysyl-[protein] + NADH + H(+). Catalyzes the oxidation of dihydrolipoamide to lipoamide. The protein is Dihydrolipoyl dehydrogenase (pdhD) of Bacillus subtilis (strain 168).